Consider the following 241-residue polypeptide: Probable transcriptional regulatory protein Neut_0281 (241 aa).

This sequence belongs to the TACO1 family.

Its subcellular location is the cytoplasm. In Nitrosomonas eutropha (strain DSM 101675 / C91 / Nm57), this protein is Probable transcriptional regulatory protein Neut_0281.